Here is a 321-residue protein sequence, read N- to C-terminus: Lipoyl synthase (321 aa).

[4Fe-4S] cluster is bound by residues Cys60, Cys65, Cys71, Cys86, Cys90, Cys93, and Ser299. The Radical SAM core domain maps to 72–288; sequence WEKKHATFMI…ETIGRTKGFL (217 aa).

This sequence belongs to the radical SAM superfamily. Lipoyl synthase family. Requires [4Fe-4S] cluster as cofactor.

It localises to the cytoplasm. The catalysed reaction is [[Fe-S] cluster scaffold protein carrying a second [4Fe-4S](2+) cluster] + N(6)-octanoyl-L-lysyl-[protein] + 2 oxidized [2Fe-2S]-[ferredoxin] + 2 S-adenosyl-L-methionine + 4 H(+) = [[Fe-S] cluster scaffold protein] + N(6)-[(R)-dihydrolipoyl]-L-lysyl-[protein] + 4 Fe(3+) + 2 hydrogen sulfide + 2 5'-deoxyadenosine + 2 L-methionine + 2 reduced [2Fe-2S]-[ferredoxin]. The protein operates within protein modification; protein lipoylation via endogenous pathway; protein N(6)-(lipoyl)lysine from octanoyl-[acyl-carrier-protein]: step 2/2. Catalyzes the radical-mediated insertion of two sulfur atoms into the C-6 and C-8 positions of the octanoyl moiety bound to the lipoyl domains of lipoate-dependent enzymes, thereby converting the octanoylated domains into lipoylated derivatives. The sequence is that of Lipoyl synthase from Mesorhizobium japonicum (strain LMG 29417 / CECT 9101 / MAFF 303099) (Mesorhizobium loti (strain MAFF 303099)).